The primary structure comprises 839 residues: Small conductance calcium-activated potassium channel protein 2 (839 aa).

Disordered stretches follow at residues methionine 1–proline 33, glutamine 64–glycine 115, alanine 195–serine 258, and serine 280–glutamine 375. 2 stretches are compositionally biased toward low complexity: residues glutamine 198 to glutamine 212 and alanine 219 to leucine 235. The span at serine 236–glutamine 253 shows a compositional bias: basic residues. A compositionally biased stretch (low complexity) spans serine 313–proline 326. Residues glycine 345 to serine 363 are compositionally biased toward gly residues. A helical transmembrane segment spans residues alanine 398–glycine 418. Position 420 is a phosphotyrosine (tyrosine 420). The helical transmembrane segment at leucine 428–tyrosine 448 threads the bilayer. The helical transmembrane segment at isoleucine 474–threonine 494 threads the bilayer. The chain crosses the membrane as a helical span at residues isoleucine 516–histidine 536. Residues leucine 565–alanine 585 traverse the membrane as a helical segment. Residues phenylalanine 605–valine 625 constitute an intramembrane region (pore-forming). A helical transmembrane segment spans residues valine 634–alanine 654. Positions aspartate 672–isoleucine 748 are calmodulin-binding. Over residues histidine 810–arginine 819 the composition is skewed to basic and acidic residues. Positions histidine 810–serine 839 are disordered. Over residues serine 828–serine 839 the composition is skewed to low complexity.

It belongs to the potassium channel KCNN family. KCa2.2/KCNN2 subfamily. Homodimer. Heteromultimer with KCNN1 and KCNN3. The complex is composed of 4 channel subunits each of which binds to a calmodulin subunit which regulates the channel activity through calcium-binding. Interacts (via N-terminal domain) with MPP2. Expressed in atrial and ventricular myocytes with higher levels in atrial myocytes (at protein level). Highly expressed in brain, liver and colon with low levels in kidney and testis. In colon, detected in smooth muscle cells.

The protein resides in the membrane. The protein localises to the cytoplasm. Its subcellular location is the myofibril. It localises to the sarcomere. It is found in the z line. The catalysed reaction is K(+)(in) = K(+)(out). Its activity is regulated as follows. Inhibited by bee venom neurotoxin apamin. Inhibited by UCL 1684 and tetraethylammonium (TEA). In terms of biological role, small conductance calcium-activated potassium channel that mediates the voltage-independent transmembrane transfer of potassium across the cell membrane through a constitutive interaction with calmodulin which binds the intracellular calcium allowing its opening. The current is characterized by a voltage-independent activation, an intracellular calcium concentration increase-dependent activation and a single-channel conductance of about 3 picosiemens. Also presents an inwardly rectifying current, thus reducing its already small outward conductance of potassium ions, which is particularly the case when the membrane potential displays positive values, above + 20 mV. The inward rectification could be due to a blockade of the outward current by intracellular divalent cations such as calcium and magnesium and could also be due to an intrinsic property of the channel pore, independent of intracellular divalent ions. There are three positively charged amino acids in the S6 transmembrane domain, close to the pore, that collectively control the conductance and rectification through an electrostatic mechanism. Additionally, electrostatic contributions from these residues also play an important role in determining the intrinsic open probability of the channel in the absence of calcium, affecting the apparent calcium affinity for activation. Forms an heteromeric complex with calmodulin, which is constitutively associated in a calcium-independent manner. Channel opening is triggered when calcium binds the calmodulin resulting in a rotary movement leading to the formation of the dimeric complex to open the gate. Plays a role in the repolarization phase of cardiac action potential. The sequence is that of Small conductance calcium-activated potassium channel protein 2 from Mus musculus (Mouse).